The following is a 136-amino-acid chain: uncharacterized protein (136 aa).

Disordered regions lie at residues 58–82 (TSDDDEKPGNSKIKSHTDQPPTTQT) and 112–136 (NNPKIKTNNPNEEFENTGADSVVTQ).

This is an uncharacterized protein from Dictyostelium discoideum (Social amoeba).